Reading from the N-terminus, the 85-residue chain is MKTVIFLIVSSLLLIGVKTDNGYLLDKYTGCKVWCVINNESCNSECKIRGGYYGYCYFWKLACFCQGARKSELWNYNTNKCNGKL.

Residues 1-19 form the signal peptide; that stretch reads MKTVIFLIVSSLLLIGVKT. Residues 20–82 form the LCN-type CS-alpha/beta domain; that stretch reads DNGYLLDKYT…LWNYNTNKCN (63 aa). 4 cysteine pairs are disulfide-bonded: Cys31–Cys81, Cys35–Cys56, Cys42–Cys63, and Cys46–Cys65.

As to expression, expressed by the venom gland.

The protein localises to the secreted. Its function is as follows. Beta toxins bind voltage-independently at site-4 of sodium channels (Nav) and shift the voltage of activation toward more negative potentials thereby affecting sodium channel activation and promoting spontaneous and repetitive firing. It binds to distinct receptor sites of mammal and insect voltage-gated sodium channels. It displays antinociceptive effect in rat models, which is due to its specific modulation of sodium channels of sensory neurons. It also significantly stimulates the binding of [3H]-ryanodine to ryanodine receptors on the sarcoplasmic reticulum of the skeletal muscle through an indirect mechanism. And it promotes noradrenaline release from the rat hippocampus slice. This Olivierus martensii (Manchurian scorpion) protein is Beta-toxin BmKAS.